The chain runs to 174 residues: MKTFVLGGGCFWCLDAVYQKTKGVTAVVSGYTGGHDPYPDYYSVCSGTTGHAEVVAVTFDEEIIPAEVILDMFFALHDPTTLNRQGYDVGTQYRSSMFYETTEEKILFEEAIDRNQALWSHPIVTEVSRLPRFHVAEEFHQDYYAKHPEQGYCQVIINPKLAKARKYYSAWLNA.

Cys-10 is an active-site residue.

This sequence belongs to the MsrA Met sulfoxide reductase family.

The catalysed reaction is L-methionyl-[protein] + [thioredoxin]-disulfide + H2O = L-methionyl-(S)-S-oxide-[protein] + [thioredoxin]-dithiol. It carries out the reaction [thioredoxin]-disulfide + L-methionine + H2O = L-methionine (S)-S-oxide + [thioredoxin]-dithiol. Functionally, has an important function as a repair enzyme for proteins that have been inactivated by oxidation. Catalyzes the reversible oxidation-reduction of methionine sulfoxide in proteins to methionine. The protein is Peptide methionine sulfoxide reductase MsrA of Pseudarthrobacter chlorophenolicus (strain ATCC 700700 / DSM 12829 / CIP 107037 / JCM 12360 / KCTC 9906 / NCIMB 13794 / A6) (Arthrobacter chlorophenolicus).